Reading from the N-terminus, the 115-residue chain is Large ribosomal subunit protein bL19 (115 aa).

This sequence belongs to the bacterial ribosomal protein bL19 family.

Its function is as follows. This protein is located at the 30S-50S ribosomal subunit interface and may play a role in the structure and function of the aminoacyl-tRNA binding site. The sequence is that of Large ribosomal subunit protein bL19 from Tolumonas auensis (strain DSM 9187 / NBRC 110442 / TA 4).